Here is a 198-residue protein sequence, read N- to C-terminus: 7-methyl-GTP pyrophosphatase (198 aa).

The active-site Proton acceptor is D69.

It belongs to the Maf family. YceF subfamily. A divalent metal cation is required as a cofactor.

The protein localises to the cytoplasm. It catalyses the reaction N(7)-methyl-GTP + H2O = N(7)-methyl-GMP + diphosphate + H(+). Nucleoside triphosphate pyrophosphatase that hydrolyzes 7-methyl-GTP (m(7)GTP). May have a dual role in cell division arrest and in preventing the incorporation of modified nucleotides into cellular nucleic acids. The chain is 7-methyl-GTP pyrophosphatase from Yersinia pestis bv. Antiqua (strain Antiqua).